Consider the following 478-residue polypeptide: Proline--tRNA ligase (478 aa).

This sequence belongs to the class-II aminoacyl-tRNA synthetase family. ProS type 3 subfamily. In terms of assembly, homodimer.

The protein resides in the cytoplasm. It carries out the reaction tRNA(Pro) + L-proline + ATP = L-prolyl-tRNA(Pro) + AMP + diphosphate. Functionally, catalyzes the attachment of proline to tRNA(Pro) in a two-step reaction: proline is first activated by ATP to form Pro-AMP and then transferred to the acceptor end of tRNA(Pro). This Clostridium novyi (strain NT) protein is Proline--tRNA ligase.